The chain runs to 373 residues: Glutamate 5-kinase (373 aa).

Lys-16 serves as a coordination point for ATP. Residues Ser-56, Asp-143, and Asn-155 each coordinate substrate. Residue Thr-175 to Asp-176 coordinates ATP. A PUA domain is found at Arg-281 to Lys-359.

Belongs to the glutamate 5-kinase family.

It is found in the cytoplasm. The enzyme catalyses L-glutamate + ATP = L-glutamyl 5-phosphate + ADP. It functions in the pathway amino-acid biosynthesis; L-proline biosynthesis; L-glutamate 5-semialdehyde from L-glutamate: step 1/2. Catalyzes the transfer of a phosphate group to glutamate to form L-glutamate 5-phosphate. The protein is Glutamate 5-kinase of Teredinibacter turnerae (strain ATCC 39867 / T7901).